The following is a 316-amino-acid chain: Apolipoprotein E (316 aa).

An N-terminal signal peptide occupies residues 1 to 18; it reads MKVLWVALVITLLAGCQA. 8 consecutive repeat copies span residues 79-100, 101-122, 123-144, 145-166, 167-188, 189-210, 211-232, and 233-254. The segment at 79-254 is 8 X 22 AA approximate tandem repeats; sequence VLMDETMKEV…HLEEMREQLE (176 aa). Residues 157–167 are LDL and other lipoprotein receptors binding; the sequence is HLRKLRKRLLR. 161–164 contributes to the heparin binding site; it reads LRKR. The interval 209–289 is lipid-binding and lipoprotein association; the sequence is AATVGTLASQ…SWFEPLVEDM (81 aa). 228–235 contacts heparin; sequence HQKLRGRM. Residues 265 to 316 form a homooligomerization region; the sequence is SQMRLQAEAFQARLKSWFEPLVEDMQRQWAGLVEKVQLAMATGPTSAPIENN. The tract at residues 277-289 is specificity for association with VLDL; that stretch reads RLKSWFEPLVEDM.

It belongs to the apolipoprotein A1/A4/E family. Homotetramer. May interact with ABCA1; functionally associated with ABCA1 in the biogenesis of HDLs. May interact with APP/A4 amyloid-beta peptide; the interaction is extremely stable in vitro but its physiological significance is unclear. May interact with MAPT. May interact with MAP2. In the cerebrospinal fluid, interacts with secreted SORL1. Interacts with PMEL; this allows the loading of PMEL luminal fragment on ILVs to induce fibril nucleation. In terms of processing, APOE exists as multiple glycosylated and sialylated glycoforms within cells and in plasma. The extent of glycosylation and sialylation are tissue and context specific. Post-translationally, glycated in plasma VLDL. Phosphorylated by FAM20C in the extracellular medium.

It is found in the secreted. The protein resides in the extracellular space. The protein localises to the extracellular matrix. Its subcellular location is the extracellular vesicle. It localises to the endosome. It is found in the multivesicular body. Functionally, APOE is an apolipoprotein, a protein associating with lipid particles, that mainly functions in lipoprotein-mediated lipid transport between organs via the plasma and interstitial fluids. APOE is a core component of plasma lipoproteins and is involved in their production, conversion and clearance. Apolipoproteins are amphipathic molecules that interact both with lipids of the lipoprotein particle core and the aqueous environment of the plasma. As such, APOE associates with chylomicrons, chylomicron remnants, very low density lipoproteins (VLDL) and intermediate density lipoproteins (IDL) but shows a preferential binding to high-density lipoproteins (HDL). It also binds a wide range of cellular receptors including the LDL receptor/LDLR and the very low-density lipoprotein receptor/VLDLR that mediate the cellular uptake of the APOE-containing lipoprotein particles. Finally, APOE also has a heparin-binding activity and binds heparan-sulfate proteoglycans on the surface of cells, a property that supports the capture and the receptor-mediated uptake of APOE-containing lipoproteins by cells. The polypeptide is Apolipoprotein E (APOE) (Tursiops truncatus (Atlantic bottle-nosed dolphin)).